Reading from the N-terminus, the 357-residue chain is Peptide chain release factor 1 (357 aa).

Gln-234 carries the post-translational modification N5-methylglutamine.

Belongs to the prokaryotic/mitochondrial release factor family. Post-translationally, methylated by PrmC. Methylation increases the termination efficiency of RF1.

It localises to the cytoplasm. Its function is as follows. Peptide chain release factor 1 directs the termination of translation in response to the peptide chain termination codons UAG and UAA. The sequence is that of Peptide chain release factor 1 from Alkaliphilus oremlandii (strain OhILAs) (Clostridium oremlandii (strain OhILAs)).